The primary structure comprises 232 residues: Ribosomal RNA small subunit methyltransferase G (232 aa).

S-adenosyl-L-methionine-binding positions include G93, L98, 144–145 (VE), and R163.

It belongs to the methyltransferase superfamily. RNA methyltransferase RsmG family.

It is found in the cytoplasm. It carries out the reaction guanosine(527) in 16S rRNA + S-adenosyl-L-methionine = N(7)-methylguanosine(527) in 16S rRNA + S-adenosyl-L-homocysteine. Functionally, specifically methylates the N7 position of guanine in position 527 of 16S rRNA. This chain is Ribosomal RNA small subunit methyltransferase G, found in Burkholderia pseudomallei (strain 1710b).